A 784-amino-acid polypeptide reads, in one-letter code: Armadillo repeat-containing X-linked protein 2 (784 aa).

Residues 1–6 (MSRARD) lie on the Mitochondrial intermembrane side of the membrane. Mitochondrion outer membrane (MOM)-targeting sequence stretches follow at residues 1–6 (MSRARD) and 26–40 (KYTR…RLTK). Residues 7–27 (AGCVAAGIVIGASAWYCVYKY) traverse the membrane as a helical; Signal-anchor segment. The Cytoplasmic segment spans residues 28 to 784 (TRGKDQKKKR…VKVIKLVNKF (757 aa)). Disordered stretches follow at residues 328 to 353 (TSGG…RTAS), 388 to 461 (HSGA…ELGM), and 488 to 522 (PESE…TIPM). The span at 396 to 418 (GTSGSSKTAATGKKAAPGAHTGA) shows a compositional bias: low complexity. A compositionally biased stretch (acidic residues) spans 488–508 (PESEEGESGWTDTESDSDSEP). ARM repeat units lie at residues 528–568 (PYEI…NNAN), 570–609 (SCNQ…NLSE), and 650–689 (ITND…NFAE).

Belongs to the eutherian X-chromosome-specific Armcx family. As to expression, widely expressed in the adult nervous tissue, especially in the forebrain, including the cerebral cortex, hippocampus and thalamus.

The protein localises to the mitochondrion. Its subcellular location is the mitochondrion outer membrane. May regulate the dynamics and distribution of mitochondria in neural cells. This is Armadillo repeat-containing X-linked protein 2 (Armcx2) from Mus musculus (Mouse).